A 24-amino-acid polypeptide reads, in one-letter code: Brevinin-1Sa (24 aa).

Cys18 and Cys24 form a disulfide bridge.

As to expression, expressed by the skin glands.

It is found in the secreted. Functionally, antibacterial activity against Gram-negative bacterium E.coli. The sequence is that of Brevinin-1Sa from Lithobates sphenocephalus (Southern leopard frog).